The primary structure comprises 255 residues: MAATHLTSTSSLTINTLPSFEGLRSASGISKINVSVAYPSFTSRSFRGLVVRAASITTSKYTSVKPLGDRVLIKTKIVEEKTTSGIFLPTAAQKKPQSGEVVAIGSGKKVGDKKLPVAVKTGAEVVYSKYTGTEIEVDGSSHLIVKEDDIIGILETDDVKDLKPLNDRLLIKVAEVENKTSGGLLLAESSKEKPSFGTVVATGPGVLDEEGNRIPLPVCSGNTVLYSKYAGNDFKGVDGSDYMVLRVSDVMAVLS.

The N-terminal 53 residues, 1 to 53 (MAATHLTSTSSLTINTLPSFEGLRSASGISKINVSVAYPSFTSRSFRGLVVRA), are a transit peptide targeting the chloroplast. Cpn-10 domain stretches follow at residues 54 to 156 (ASIT…ILET) and 157 to 255 (DDVK…AVLS).

The protein belongs to the GroES chaperonin family. In terms of assembly, forms stable complexes with CPN60 in the presence of ATP.

The protein localises to the plastid. It is found in the chloroplast. In terms of biological role, seems to function only as a co-chaperone, along with cpn60, and in certain cases is essential for the discharge of biologically active proteins from cpn60. The protein is 20 kDa chaperonin, chloroplastic (CPN21) of Spinacia oleracea (Spinach).